We begin with the raw amino-acid sequence, 362 residues long: RING-H2 finger protein ATL52 (362 aa).

A helical membrane pass occupies residues 58–78 (LIALIGILTSALILVSYYTLI). The segment at 142 to 184 (CSVCLSEFEENESLRLLPKCNHAFHLPCIDTWLKSHSNCPLCR) adopts an RING-type; atypical zinc-finger fold. Disordered regions lie at residues 252-271 (DARSELQLPEERRETKDEDS) and 296-333 (EDEEGESGGVGTSQRREEGEDGDGKTIPPTEANQRSGG). The segment covering 309-319 (QRREEGEDGDG) has biased composition (basic and acidic residues).

This sequence belongs to the RING-type zinc finger family. ATL subfamily. In terms of tissue distribution, expressed in flowers.

The protein resides in the membrane. It carries out the reaction S-ubiquitinyl-[E2 ubiquitin-conjugating enzyme]-L-cysteine + [acceptor protein]-L-lysine = [E2 ubiquitin-conjugating enzyme]-L-cysteine + N(6)-ubiquitinyl-[acceptor protein]-L-lysine.. It functions in the pathway protein modification; protein ubiquitination. This is RING-H2 finger protein ATL52 (ATL52) from Arabidopsis thaliana (Mouse-ear cress).